The following is a 1211-amino-acid chain: Endoplasmic reticulum transmembrane helix translocase (1211 aa).

At 1–23 (MGSKALITSPDISSGQLYIKLPT) the chain is on the cytoplasmic side. The chain crosses the membrane as a helical span at residues 24–44 (FFHLYVWPFALFVYPYIGYVY). Residues 45–54 (QNKLYSEEVR) are Lumenal-facing. A helical membrane pass occupies residues 55–75 (YLTYIAVGTIHALFWLAGEWN). Over 76 to 191 (TKVYCLMTCR…FDIPIPTFGT (116 aa)) the chain is Cytoplasmic. The segment at 155-185 (TIGTLKKSTGLTNIQSEIFLYRYGKNCFDIP) is A-domain; part 1. Residues 192 to 212 (LFKEHAVAPFFVFQIFCCVLW) form a helical membrane-spanning segment. Over 213–216 (CLDD) the chain is Lumenal. Residues 217 to 237 (YWYFSLFSMFMIIALECSVVW) form a helical membrane-spanning segment. The Cytoplasmic portion of the chain corresponds to 238 to 397 (QRQRTLTEFR…EKVTANNRES (160 aa)). The A-domain; part 2 stretch occupies residues 250 to 388 (SIKPYEIQVY…LVRTMVFSSE (139 aa)). Residues 398-418 (LYFILFLLVFAIAASGYVWHV) form a helical membrane-spanning segment. Over 419-1057 (GSKTERSRYK…KERPQAGIFN (639 aa)) the chain is Lumenal. The P-domain; part 1 stretch occupies residues 464–493 (YIYCTEPFRIPLSGHLDICCFDKTGTLTEE). Aspartate 485 functions as the 4-aspartylphosphate intermediate in the catalytic mechanism. Residues aspartate 485 and threonine 487 each coordinate Mg(2+). ATP-binding positions include 485 to 487 (DKT), phenylalanine 587, arginine 644, aspartate 710, and 824 to 828 (DGTND). Residues 495–685 (MVVQGIAGVN…FAGFLIFTSP (191 aa)) form an N-domain region. The interval 688-845 (EDARQTVQML…HVGVALLNAS (158 aa)) is P-domain; part 2. Aspartate 824 is a binding site for Mg(2+). The segment at 846 to 955 (EEDMLEMQER…NASDDEAPKL (110 aa)) is arm-like. The segment at 956–971 (KLGDASVAAPFTSKLA) is P-domain; part 3. Residues 1058–1078 (TYIIGSVLGQFAIHIVTLIYI) traverse the membrane as a helical segment. Residues 1079-1100 (TRVVYLYEDPLEKVDLEETFKP) are Cytoplasmic-facing. A helical transmembrane segment spans residues 1101–1121 (SLLNTAIYLLQLIQQVSTFAI). At 1122–1136 (NYQGRPFREALSENK) the chain is on the lumenal side. The helical transmembrane segment at 1137-1157 (GMYYGLLGIAFVAIAGVTEFS) threads the bilayer. Topologically, residues 1158-1174 (PELNAKLQLVKMAYNFQ) are cytoplasmic. The helical transmembrane segment at 1175–1195 (IQLLATMVVDYAACWIIEELM) threads the bilayer. At 1196 to 1211 (KKYFRDNKPKEIVLRN) the chain is on the lumenal side.

The protein belongs to the cation transport ATPase (P-type) (TC 3.A.3) family. Type V subfamily. Mg(2+) is required as a cofactor.

The protein localises to the endoplasmic reticulum membrane. It catalyses the reaction [protein]-with a C-terminal TM segment(out) + ATP + H2O = [protein]-with a C-terminal TM segment(in) + ADP + phosphate + H(+). Its function is as follows. Endoplasmic reticulum translocase required to remove mitochondrial transmembrane proteins mistargeted to the endoplasmic reticulum. Acts as a dislocase that mediates the ATP-dependent extraction of mislocalized mitochondrial transmembrane proteins from the endoplasmic reticulum membrane. Specifically binds mitochondrial tail-anchored transmembrane proteins: has an atypically large substrate-binding pocket that recognizes and binds moderately hydrophobic transmembranes with short hydrophilic lumenal domains. Involved in controlling nuclear calcium ion levels. Required for cytokinesis and stabilizing microtubules. Required for assembly of the forespore membrane. Involved in calcium transport to the endoplasmic reticulum. The protein is Endoplasmic reticulum transmembrane helix translocase of Schizosaccharomyces pombe (strain 972 / ATCC 24843) (Fission yeast).